The sequence spans 673 residues: ATP-binding cassette sub-family G member 8 (673 aa).

Residues 1 to 11 are compositionally biased toward basic and acidic residues; the sequence is MAGKAAEERGL. Residues 1–25 are disordered; the sequence is MAGKAAEERGLPKGATPQDTSGLQD. The Cytoplasmic segment spans residues 1–416; the sequence is MAGKAAEERG…ISNDFRDLPT (416 aa). One can recognise an ABC transporter domain in the interval 47-313; it reads LEVRDLNYQV…FTAIGYPCPR (267 aa). The ABC transmembrane type-2 domain occupies 411–665; it reads FRDLPTLLIH…VLYYVSLRFI (255 aa). The helical transmembrane segment at 417 to 437 threads the bilayer; it reads LLIHGAEACLMSMTIGFLYFG. The Extracellular portion of the chain corresponds to 438-447; that stretch reads HGSIQLSFMD. The helical transmembrane segment at 448 to 468 threads the bilayer; sequence TAALLFMIGALIPFNVILDVI. Topologically, residues 469 to 497 are cytoplasmic; that stretch reads SKCYSERAMLYYELEDGLYTTGPYFFAKI. Residues 498–518 traverse the membrane as a helical segment; it reads LGELPEHCAYIIIYGMPTYWL. The Extracellular portion of the chain corresponds to 519 to 527; that stretch reads ANLRPGLQP. The chain crosses the membrane as a helical span at residues 528–548; that stretch reads FLLHFLLVWLVVFCCRIMALA. Over 549–555 the chain is Cytoplasmic; that stretch reads AAALLPT. Residues 556-576 form a helical membrane-spanning segment; the sequence is FHMASFFSNALYNSFYLAGGF. Residues 577-639 are Extracellular-facing; that stretch reads MINLSSLWTV…LSVMELDSYP (63 aa). The N-linked (GlcNAc...) asparagine glycan is linked to N619. The chain crosses the membrane as a helical span at residues 640-660; that stretch reads LYAIYLIVIGLSGGFMVLYYV. Topologically, residues 661–673 are cytoplasmic; sequence SLRFIKQKPSQDW.

The protein belongs to the ABC transporter superfamily. ABCG family. Eye pigment precursor importer (TC 3.A.1.204) subfamily. Heterodimer with ABCG8. The cofactor is Mg(2+). In terms of processing, N-glycosylated. Predominantly expressed in the liver. Low expression levels in the small intestine and colon. Very low levels in other tissues, including brain, heart and spleen.

It localises to the cell membrane. Its subcellular location is the apical cell membrane. It carries out the reaction cholesterol(in) + ATP + H2O = cholesterol(out) + ADP + phosphate + H(+). It catalyses the reaction sitosterol(in) + ATP + H2O = sitosterol(out) + ADP + phosphate + H(+). With respect to regulation, the ATPase activity of the heterodimer is stimulated by cholate. Taurocholate, glycocholate, taurochenodeoxycholate, glycochenodeoxycholate and taurodeoxycholate also stimulate ATPase activity, but to a lower degree. Glycodeoxycholate has no significant effect on ATPase activity. ATPase activity is inhibited by vanadate and by berillium fluoride. In terms of biological role, ABCG5 and ABCG8 form an obligate heterodimer that mediates Mg(2+)- and ATP-dependent sterol transport across the cell membrane. Plays an essential role in the selective transport of the dietary cholesterol in and out of the enterocytes and in the selective sterol excretion by the liver into bile. Required for normal sterol homeostasis. The heterodimer with ABCG5 has ATPase activity. This chain is ATP-binding cassette sub-family G member 8, found in Homo sapiens (Human).